We begin with the raw amino-acid sequence, 655 residues long: Potassium voltage-gated channel subfamily A member 4 (655 aa).

Residues 1-306 (MEVAMVSAES…LLFEYPESSS (306 aa)) lie on the Cytoplasmic side of the membrane. The interval 24–153 (QARARERERL…SEEDHGDGCS (130 aa)) is disordered. Over residues 36–50 (SRAAAAAAVAAATAA) the composition is skewed to low complexity. The segment covering 81 to 90 (GSREEEATRT) has biased composition (basic and acidic residues). The span at 91–100 (EKKKKLHHRQ) shows a compositional bias: basic residues. Residue serine 123 is modified to Phosphoserine. The segment covering 123–138 (SEEEEDEEEEEEEEEE) has biased composition (acidic residues). Residues 139–150 (GRFYYSEEDHGD) are compositionally biased toward basic and acidic residues. The helical transmembrane segment at 307–328 (PARGIAIVSVLVILISIVIFCL) threads the bilayer. The Extracellular portion of the chain corresponds to 329–372 (ETLPEFRDDRDLIMALSAGGHSRLLNDTSAPHLENSGHTIFNDP). The N-linked (GlcNAc...) asparagine glycan is linked to asparagine 354. Residues 373–394 (FFIVETVCIVWFSFEFVVRCFA) traverse the membrane as a helical segment. Over 395 to 405 (CPSQALFFKNI) the chain is Cytoplasmic. Residues 406-426 (MNIIDIVSILPYFITLGTDLA) traverse the membrane as a helical segment. Residues 427 to 441 (QQQGGGNGQQQQAMS) are Extracellular-facing. A helical; Voltage-sensor membrane pass occupies residues 442-462 (FAILRIIRLVRVFRIFKLSRH). The Cytoplasmic segment spans residues 463 to 477 (SKGLQILGHTLRASM). An S4-S5 linker region spans residues 464-477 (KGLQILGHTLRASM). The helical transmembrane segment at 478-499 (RELGLLIFFLFIGVILFSSAVY) threads the bilayer. The Extracellular portion of the chain corresponds to 500–513 (FAEADEPTTHFQSI). The segment at residues 514-525 (PDAFWWAVVTMT) is an intramembrane region (helical). The short motif at 526–531 (TVGYGD) is the Selectivity filter element. Residues 526–533 (TVGYGDMK) lie within the membrane without spanning it. Over 534-540 (PITVGGK) the chain is Extracellular. The helical transmembrane segment at 541-569 (IVGSLCAIAGVLTIALPVPVIVSNFNYFY) threads the bilayer. Residues 570 to 655 (HRETENEEQT…SNAKAVETDV (86 aa)) lie on the Cytoplasmic side of the membrane. At serine 601 the chain carries Phosphoserine; by PKA. Positions 631 to 642 (CQGKGDDSETDK) are enriched in basic and acidic residues. The interval 631-655 (CQGKGDDSETDKNNCSNAKAVETDV) is disordered. A PDZ-binding motif is present at residues 653 to 655 (TDV).

This sequence belongs to the potassium channel family. A (Shaker) (TC 1.A.1.2) subfamily. Kv1.4/KCNA4 sub-subfamily. In terms of assembly, homotetramer and heterotetramer of potassium channel proteins. Interacts with KCNAB1 and KCNAB2. Interacts with DLG1, DLG2 and DLG4 via their PDZ domains. Interacts with SIGMAR1. Part of a complex containing KCNA1, KCNAB1 and LGI1. Detected in a complex with KCNA1. Interacts with KCNA2. Interacts (via cytoplasmic N-terminal domain) with KCNRG. In terms of processing, N-glycosylated. As to expression, detected in brain (at protein level). Heart and brain.

Its subcellular location is the cell membrane. The protein localises to the cell projection. The protein resides in the axon. The catalysed reaction is K(+)(in) = K(+)(out). In terms of biological role, voltage-gated potassium channel that mediates transmembrane potassium transport in excitable membranes. Forms tetrameric potassium-selective channels through which potassium ions pass in accordance with their electrochemical gradient. The channel alternates between opened and closed conformations in response to the voltage difference across the membrane. Can form functional homotetrameric channels and heterotetrameric channels that contain variable proportions of KCNA1, KCNA2, KCNA4, KCNA5, and possibly other family members as well; channel properties depend on the type of alpha subunits that are part of the channel. Channel properties are modulated by cytoplasmic beta subunits that regulate the subcellular location of the alpha subunits and promote rapid inactivation. In vivo, membranes probably contain a mixture of heteromeric potassium channel complexes, making it difficult to assign currents observed in intact tissues to any particular potassium channel family member. Homotetrameric KCNA4 forms a potassium channel that opens in response to membrane depolarization, followed by rapid spontaneous channel closure. Likewise, a heterotetrameric channel formed by KCNA1 and KCNA4 shows rapid inactivation. This is Potassium voltage-gated channel subfamily A member 4 (Kcna4) from Rattus norvegicus (Rat).